The following is a 592-amino-acid chain: A-type ATP synthase subunit A (592 aa).

ATP is bound at residue 233-240; sequence GPFGSGKT.

Belongs to the ATPase alpha/beta chains family. In terms of assembly, has multiple subunits with at least A(3), B(3), C, D, E, F, H, I and proteolipid K(x).

The protein resides in the cell membrane. It carries out the reaction ATP + H2O + 4 H(+)(in) = ADP + phosphate + 5 H(+)(out). Component of the A-type ATP synthase that produces ATP from ADP in the presence of a proton gradient across the membrane. The A chain is the catalytic subunit. The sequence is that of A-type ATP synthase subunit A from Saccharolobus islandicus (strain Y.N.15.51 / Yellowstone #2) (Sulfolobus islandicus).